The primary structure comprises 504 residues: Pre-mRNA-processing factor 19 (504 aa).

Position 2 is an N-acetylserine (Ser-2). One can recognise a U-box domain in the interval 2-73; it reads SLICSISNEV…KPPSATSIPA (72 aa). Residues 68–223 are may mediate interaction with PSMC5; the sequence is ATSIPAILKA…VGLHSASIPG (156 aa). Residues Lys-122, Lys-179, Lys-244, and Lys-261 each carry the N6-acetyllysine modification. Residues 219–259 form a WD 1 repeat; the sequence is ASIPGILALDLCPSDTNKILTGGADKNVVVFDKSSEQILAT. 6 WD repeats span residues 262 to 301, 304 to 345, 348 to 387, 390 to 429, 433 to 472, and 473 to 503; these read GHTK…CVQV, AHES…TKVT, TSGC…NVAN, GHSG…NFKT, DNNF…LHFT, and EHSG…KFYS.

The protein belongs to the WD repeat PRP19 family. In terms of assembly, homotetramer. Component of activated, catalytic and post-catalytic spliceosomes. Component of the Prp19 complex/PRP19C/Nineteen complex/NTC and related complexes described as PRP19-CDC5L splicing complex and PSO4 complex. A homotetramer of PRPF19, CDC5L, PLRG1 and BCAS2 constitute the core of those complexes. The interaction with CDC5L, PLRG1 and BCAS2 is direct within this core complex. At least three less stably associated proteins CTNNBL1, CWC15 and HSPA8 are found in the Prp19 complex. The Prp19 complex associates with the spliceosome during its assembly and remodeling recruiting additional proteins. Component of the XAB2 complex, a multimeric protein complex composed of XAB2, PRPF19, AQR, ZNF830, ISY1, and PPIE. Interacts with CWC22 and EIF4A3 in an RNA-independent manner. Interacts with RPA1 and RPA2; the PRP19-CDC5L complex is recruited to the sites of DNA repair where it interacts with the replication protein A complex (RPA). Interacts with SETMAR; required for SETMAR recruitment to site of DNA damage. Interacts with U2AF2; the interaction is direct and recruits the Prp19 complex to RNA polymerase II C-terminal domain (CTD) and the pre-mRNA. Interacts with PRPF3. Interacts with APEX1, DNTT and PSMB4. Interacts with PSMC5. Interacts with KNSTRN. Interacts (via N-terminus) with CDC5L. Interacts with KHDC4. Interacts with USB1. Interacts with DDX41.

It is found in the nucleus. Its subcellular location is the nucleoplasm. The protein resides in the cytoplasm. It localises to the cytoskeleton. The protein localises to the spindle. It is found in the lipid droplet. The catalysed reaction is S-ubiquitinyl-[E2 ubiquitin-conjugating enzyme]-L-cysteine + [acceptor protein]-L-lysine = [E2 ubiquitin-conjugating enzyme]-L-cysteine + N(6)-ubiquitinyl-[acceptor protein]-L-lysine.. The protein operates within protein modification; protein ubiquitination. Functionally, ubiquitin-protein ligase which is a core component of several complexes mainly involved pre-mRNA splicing and DNA repair. Required for pre-mRNA splicing as component of the spliceosome. Core component of the PRP19C/Prp19 complex/NTC/Nineteen complex which is part of the spliceosome and participates in its assembly, its remodeling and is required for its activity. During assembly of the spliceosome, mediates 'Lys-63'-linked polyubiquitination of the U4 spliceosomal protein PRPF3. Ubiquitination of PRPF3 allows its recognition by the U5 component PRPF8 and stabilizes the U4/U5/U6 tri-snRNP spliceosomal complex. Recruited to RNA polymerase II C-terminal domain (CTD) and the pre-mRNA, it may also couple the transcriptional and spliceosomal machineries. The XAB2 complex, which contains PRPF19, is also involved in pre-mRNA splicing, transcription and transcription-coupled repair. Beside its role in pre-mRNA splicing PRPF19, as part of the PRP19-CDC5L complex, plays a role in the DNA damage response/DDR. It is recruited to the sites of DNA damage by the RPA complex where PRPF19 directly ubiquitinates RPA1 and RPA2. 'Lys-63'-linked polyubiquitination of the RPA complex allows the recruitment of the ATR-ATRIP complex and the activation of ATR, a master regulator of the DNA damage response. May also play a role in DNA double-strand break (DSB) repair by recruiting the repair factor SETMAR to altered DNA. As part of the PSO4 complex may also be involved in the DNA interstrand cross-links/ICLs repair process. In addition, may also mediate 'Lys-48'-linked polyubiquitination of substrates and play a role in proteasomal degradation. May play a role in the biogenesis of lipid droplets. May play a role in neural differentiation possibly through its function as part of the spliceosome. This chain is Pre-mRNA-processing factor 19 (PRPF19), found in Bos taurus (Bovine).